The sequence spans 89 residues: AETRNFALRDKKGNEIGVFTGKQPRQAALKAANRGHKDIRLRERGTKKVHIFAGERVKVKKPKGAPAWMPNEIWKPKVKKIGVEKLDEI.

Protects DNA against thermal denaturation and modulates transcription. In Methanothrix soehngenii (Methanosaeta concilii), this protein is Chromosomal protein MC1a.